Consider the following 172-residue polypeptide: Adenine phosphoribosyltransferase (172 aa).

The protein belongs to the purine/pyrimidine phosphoribosyltransferase family. In terms of assembly, homodimer.

The protein resides in the cytoplasm. The catalysed reaction is AMP + diphosphate = 5-phospho-alpha-D-ribose 1-diphosphate + adenine. The protein operates within purine metabolism; AMP biosynthesis via salvage pathway; AMP from adenine: step 1/1. Its function is as follows. Catalyzes a salvage reaction resulting in the formation of AMP, that is energically less costly than de novo synthesis. The chain is Adenine phosphoribosyltransferase from Rippkaea orientalis (strain PCC 8801 / RF-1) (Cyanothece sp. (strain PCC 8801)).